We begin with the raw amino-acid sequence, 131 residues long: CLAVATA3/ESR (CLE)-related protein ESR1 (131 aa).

An N-terminal signal peptide occupies residues 1–26 (MASRMGMVAIVSLFVCALAASTSVNA). Residues 49 to 131 (RQQQQGGFIG…IGPPPLSDRY (83 aa)) form a disordered region. A hydroxyproline mark is found at Pro-81 and Pro-84. Pro-84 is a glycosylation site (O-linked (Ara...) hydroxyproline).

The protein belongs to the CLV3/ESR signal peptide family. Post-translationally, the O-glycosylation (arabinosylation) of the hydroxyproline Pro-84 enhances binding affinity of the ESR1p peptide for its receptor. As to expression, seed endosperm.

The protein resides in the secreted. It is found in the extracellular space. In terms of biological role, extracellular signal peptide that regulates cell fate. The polypeptide is CLAVATA3/ESR (CLE)-related protein ESR1 (Zea mays (Maize)).